The primary structure comprises 257 residues: Probable enoyl-CoA hydratase echA17 (257 aa).

It belongs to the enoyl-CoA hydratase/isomerase family.

It carries out the reaction a (3S)-3-hydroxyacyl-CoA = a (2E)-enoyl-CoA + H2O. The catalysed reaction is a 4-saturated-(3S)-3-hydroxyacyl-CoA = a (3E)-enoyl-CoA + H2O. Functionally, could possibly oxidize fatty acids using specific components. The protein is Probable enoyl-CoA hydratase echA17 (echA17) of Mycolicibacterium paratuberculosis (strain ATCC BAA-968 / K-10) (Mycobacterium paratuberculosis).